The primary structure comprises 487 residues: GTPase Der (487 aa).

EngA-type G domains follow at residues 3–167 (FTLA…EGFA) and 203–378 (LQIA…DIWN). Residues 9 to 16 (GRPNVGKS), 56 to 60 (DTAGL), 119 to 122 (NKAE), 209 to 216 (GRPNAGKS), 256 to 260 (DTAGM), and 321 to 324 (NKWD) each bind GTP. The KH-like domain maps to 379–463 (RRITTARLNS…PIRLTMRGQG (85 aa)). The segment at 459-487 (MRGQGDKNPFKERKFRTPSRLRKHLGKKG) is disordered. Basic residues predominate over residues 471 to 487 (RKFRTPSRLRKHLGKKG).

It belongs to the TRAFAC class TrmE-Era-EngA-EngB-Septin-like GTPase superfamily. EngA (Der) GTPase family. In terms of assembly, associates with the 50S ribosomal subunit.

Its function is as follows. GTPase that plays an essential role in the late steps of ribosome biogenesis. This Cereibacter sphaeroides (strain ATCC 17025 / ATH 2.4.3) (Rhodobacter sphaeroides) protein is GTPase Der.